The primary structure comprises 163 residues: Probable chemoreceptor glutamine deamidase CheD (163 aa).

Belongs to the CheD family.

It catalyses the reaction L-glutaminyl-[protein] + H2O = L-glutamyl-[protein] + NH4(+). In terms of biological role, probably deamidates glutamine residues to glutamate on methyl-accepting chemotaxis receptors (MCPs), playing an important role in chemotaxis. This chain is Probable chemoreceptor glutamine deamidase CheD, found in Borreliella burgdorferi (strain ATCC 35210 / DSM 4680 / CIP 102532 / B31) (Borrelia burgdorferi).